The chain runs to 85 residues: N.vectensis toxin 1 5 (85 aa).

A signal peptide spans 1–20; sequence MASFKIVIVCLALLVAVACA. Residues 21–36 constitute a propeptide that is removed on maturation; sequence RRRDMMSDDELDFHLS. 3 disulfides stabilise this stretch: Cys42–Cys82, Cys44–Cys72, and Cys65–Cys83.

This sequence belongs to the sea anemone sodium channel inhibitory toxin family. Type II subfamily. Expressed in ectodermal glands and in clumps outside of the extodermal layer. Is not expressed in nematocytes. In adult female tissues, shows similar expression levels in mesenteries (gametes-producing tissue), tentacles, pharynx and physa.

It localises to the secreted. Binds to site 3 of voltage-gated sodium channels and inhibits the inactivation process. Is highly active on DmNav1/TipE (drosophila) and is only extremely weakly active on rat Nav1.4-beta-1/SCN4A-SCN1B, and on human Nav1.5-beta-1/SCN5A-beta-1. This reveals high specificity for arthropod over mammalian channels. In vivo, when released into the medium, this recombinant toxin induces impaired swimming, paralysis and death of the crustacean A.nauplii within several hours. Also causes paralysis of cherry shrimps immediately after injection at very low doses. Its effect on zebrafish (D.rerio) larvae is also rapid, since it induces tail twitching accompanied by impaired swimming after 20 minutes and complete paralysis within 45 minutes. It has also been observed to cause death of zebrafish larvae within 1 hour. The sequence is that of N.vectensis toxin 1 5 from Nematostella vectensis (Starlet sea anemone).